We begin with the raw amino-acid sequence, 316 residues long: Glutathione synthetase (316 aa).

Residues 124 to 310 (EKLFTAWFPE…ITGKLMDAIE (187 aa)) form the ATP-grasp domain. Position 150 to 207 (150 to 207 (FREEHGDVILKPLDGMGGASIFRVKENDPNVSVIIETLTNHGQNYAMAQTFVPDISNG)) interacts with ATP. The Mg(2+) site is built by Glu281 and Asn283.

It belongs to the prokaryotic GSH synthase family. Requires Mg(2+) as cofactor. The cofactor is Mn(2+).

It carries out the reaction gamma-L-glutamyl-L-cysteine + glycine + ATP = glutathione + ADP + phosphate + H(+). It participates in sulfur metabolism; glutathione biosynthesis; glutathione from L-cysteine and L-glutamate: step 2/2. The polypeptide is Glutathione synthetase (Vibrio parahaemolyticus serotype O3:K6 (strain RIMD 2210633)).